Here is a 117-residue protein sequence, read N- to C-terminus: Protein Turandot F (117 aa).

A signal peptide spans 1–22; that stretch reads MKTVILFSFLLVLLGYLGAGHA.

This sequence belongs to the Turandot family.

It localises to the secreted. Functionally, a humoral factor that may play a role in stress tolerance. This is Protein Turandot F from Drosophila sechellia (Fruit fly).